Reading from the N-terminus, the 357-residue chain is S-adenosyl-L-methionine:benzoic acid/salicylic acid carboxyl methyltransferase 3 (357 aa).

Tyr-18 contributes to the S-adenosyl-L-homocysteine binding site. Gln-25 provides a ligand contact to benzoate. Residues Cys-59, Asn-64, Asp-96, Leu-97, Ser-135, and Phe-136 each contribute to the S-adenosyl-L-homocysteine site. Position 157 (Trp-157) interacts with benzoate. Positions 168, 254, 256, and 257 each coordinate Mg(2+). Gln-260 provides a ligand contact to benzoate.

It belongs to the methyltransferase superfamily. Type-7 methyltransferase family.

It catalyses the reaction benzoate + S-adenosyl-L-methionine = methyl benzoate + S-adenosyl-L-homocysteine. The protein operates within aromatic compound metabolism. Functionally, converts benzoic acid into the volatile ester methyl benzoates. This scent, mostly produced in a rhythmical, diurnal manner, attracts the pollinators. The polypeptide is S-adenosyl-L-methionine:benzoic acid/salicylic acid carboxyl methyltransferase 3 (Petunia hybrida (Petunia)).